The primary structure comprises 633 residues: 1-deoxy-D-xylulose-5-phosphate synthase (633 aa).

Thiamine diphosphate is bound by residues H72 and 113-115; that span reads GHS. D144 serves as a coordination point for Mg(2+). Thiamine diphosphate is bound by residues 145–146, N173, Y284, and E367; that span reads GA. N173 contacts Mg(2+).

This sequence belongs to the transketolase family. DXPS subfamily. Homodimer. It depends on Mg(2+) as a cofactor. The cofactor is thiamine diphosphate.

The catalysed reaction is D-glyceraldehyde 3-phosphate + pyruvate + H(+) = 1-deoxy-D-xylulose 5-phosphate + CO2. Its pathway is metabolic intermediate biosynthesis; 1-deoxy-D-xylulose 5-phosphate biosynthesis; 1-deoxy-D-xylulose 5-phosphate from D-glyceraldehyde 3-phosphate and pyruvate: step 1/1. Functionally, catalyzes the acyloin condensation reaction between C atoms 2 and 3 of pyruvate and glyceraldehyde 3-phosphate to yield 1-deoxy-D-xylulose-5-phosphate (DXP). The sequence is that of 1-deoxy-D-xylulose-5-phosphate synthase from Lysinibacillus sphaericus (strain C3-41).